Consider the following 601-residue polypeptide: MKMNRILLLLLTFSSAIHSPLHGESLVCQNALKDLSFLEHLLQVKYAPKTWKEQYLGWDLSKSSVFAEQKLRSEDNPSTSFCQQVIADFIGALSDFHAGVSFFAVESAYLPYSVQKSSDGRFYFVDVMTFSSDIRVGDELLEVDGQPVAEALATLYGTNHKGTLAEESAALRTLFSRMASLGHKVPSGRITLKVRRSSGSVKDVRAKWRYTPESVGDLATIAPSIKAPQLQKSMRGAFPKKESVFHQSSTLFYSPMVPHFWSEFRNHYATSGLKSGYNIGDTDGFFPVMGPVIWESDGIFHAYIFPLVDENGRSHNVGFIRIPTYGWQEMEDLDSIGTPPWEEFGKIITLFSEKTEALIIDQTNNPGGSVMYLYGLLSMLTDKPLDLPKHRMILTQDEVVDALDWLNLLENVDTNAEARIALGDNMEGYPIDLQAAEYLKSFAHQVLACWKNGDIELSTPIPLFGFEKIHPHPRVQYTKPICVLINEQDFSCADFFPAILKDNDRALVVGTRTAGAGGFVFNVQFPNRTGIKSCSLTGSLAVREHGDLIENVGVEPHIEIPFTANDIRYRGYSEYIQKVQKLVAQLINNDSVIILSEDGSF.

Belongs to the chlamydial CPn_1016/CT_858/TC_0248 family.

This is an uncharacterized protein from Chlamydia muridarum (strain MoPn / Nigg).